We begin with the raw amino-acid sequence, 130 residues long: Chemotaxis protein CheY-3 (130 aa).

The Response regulatory domain occupies 10–127 (KILIVDDFST…TLKEKLDKIF (118 aa)). Positions 15, 16, 60, and 62 each coordinate Mg(2+). A 4-aspartylphosphate modification is found at Asp-60.

Interacts with FliM. It depends on Mg(2+) as a cofactor.

It localises to the cytoplasm. In terms of biological role, acts as a response regulator to control chemotaxis. Involved in the transmission of sensory signals from the chemoreceptors to the flagellar motors. Switches the flagellar rotation by binding to the flagellar motor switch protein FliM. In its active (phosphorylated or acetylated) form, exhibits enhanced binding to a switch component, FliM, at the flagellar motor which induces a change from counterclockwise to clockwise flagellar rotation. This chain is Chemotaxis protein CheY-3, found in Vibrio cholerae serotype O1 (strain ATCC 39315 / El Tor Inaba N16961).